Here is a 196-residue protein sequence, read N- to C-terminus: Guanylate kinase (196 aa).

A disordered region spans residues 1–24; it reads MPVESGAGNDQPKRLTVLSGPSGV. Residues 13–191 form the Guanylate kinase-like domain; sequence KRLTVLSGPS…VCDELLALIA (179 aa). 20–27 contacts ATP; that stretch reads GPSGVGKS.

The protein belongs to the guanylate kinase family.

The protein localises to the cytoplasm. The enzyme catalyses GMP + ATP = GDP + ADP. In terms of biological role, essential for recycling GMP and indirectly, cGMP. This chain is Guanylate kinase, found in Thermobifida fusca (strain YX).